The chain runs to 475 residues: Sulfate adenylyltransferase subunit 1 (475 aa).

The tr-type G domain occupies 24–240 (KSLLRFLTCG…ESAEVERELE (217 aa)). The interval 33–40 (GSVDDGKS) is G1. A GTP-binding site is contributed by 33–40 (GSVDDGKS). The tract at residues 91-95 (GITID) is G2. The tract at residues 112 to 115 (DTPG) is G3. Residues 112-116 (DTPGH) and 167-170 (NKMD) each bind GTP. Residues 167-170 (NKMD) form a G4 region. The segment at 204–206 (SAL) is G5.

The protein belongs to the TRAFAC class translation factor GTPase superfamily. Classic translation factor GTPase family. CysN/NodQ subfamily. As to quaternary structure, heterodimer composed of CysD, the smaller subunit, and CysN.

It catalyses the reaction sulfate + ATP + H(+) = adenosine 5'-phosphosulfate + diphosphate. It participates in sulfur metabolism; hydrogen sulfide biosynthesis; sulfite from sulfate: step 1/3. With CysD forms the ATP sulfurylase (ATPS) that catalyzes the adenylation of sulfate producing adenosine 5'-phosphosulfate (APS) and diphosphate, the first enzymatic step in sulfur assimilation pathway. APS synthesis involves the formation of a high-energy phosphoric-sulfuric acid anhydride bond driven by GTP hydrolysis by CysN coupled to ATP hydrolysis by CysD. This Aeromonas hydrophila subsp. hydrophila (strain ATCC 7966 / DSM 30187 / BCRC 13018 / CCUG 14551 / JCM 1027 / KCTC 2358 / NCIMB 9240 / NCTC 8049) protein is Sulfate adenylyltransferase subunit 1.